Consider the following 599-residue polypeptide: Elongation factor 4 (599 aa).

The 183-residue stretch at 2–184 (KNIRNFSIIA…RLVRDIPPPE (183 aa)) folds into the tr-type G domain. GTP contacts are provided by residues 14–19 (DHGKST) and 131–134 (NKID).

This sequence belongs to the TRAFAC class translation factor GTPase superfamily. Classic translation factor GTPase family. LepA subfamily.

It localises to the cell inner membrane. The catalysed reaction is GTP + H2O = GDP + phosphate + H(+). Its function is as follows. Required for accurate and efficient protein synthesis under certain stress conditions. May act as a fidelity factor of the translation reaction, by catalyzing a one-codon backward translocation of tRNAs on improperly translocated ribosomes. Back-translocation proceeds from a post-translocation (POST) complex to a pre-translocation (PRE) complex, thus giving elongation factor G a second chance to translocate the tRNAs correctly. Binds to ribosomes in a GTP-dependent manner. The sequence is that of Elongation factor 4 from Shigella dysenteriae serotype 1 (strain Sd197).